The following is an 864-amino-acid chain: Leucine--tRNA ligase (864 aa).

The 'HIGH' region signature appears at 40-51 (PYPSGAGLHVGH). The 'KMSKS' region signature appears at 636–640 (KMSKS). Lys639 contributes to the ATP binding site.

The protein belongs to the class-I aminoacyl-tRNA synthetase family.

Its subcellular location is the cytoplasm. The enzyme catalyses tRNA(Leu) + L-leucine + ATP = L-leucyl-tRNA(Leu) + AMP + diphosphate. The chain is Leucine--tRNA ligase from Leptospira borgpetersenii serovar Hardjo-bovis (strain JB197).